Reading from the N-terminus, the 425-residue chain is Serine--tRNA ligase (425 aa).

233 to 235 (TAE) is a binding site for L-serine. 264–266 (RAE) is a binding site for ATP. Position 287 (Glu-287) interacts with L-serine. 351 to 354 (EISS) provides a ligand contact to ATP. An L-serine-binding site is contributed by Ser-387.

The protein belongs to the class-II aminoacyl-tRNA synthetase family. Type-1 seryl-tRNA synthetase subfamily. Homodimer. The tRNA molecule binds across the dimer.

The protein localises to the cytoplasm. The enzyme catalyses tRNA(Ser) + L-serine + ATP = L-seryl-tRNA(Ser) + AMP + diphosphate + H(+). It carries out the reaction tRNA(Sec) + L-serine + ATP = L-seryl-tRNA(Sec) + AMP + diphosphate + H(+). The protein operates within aminoacyl-tRNA biosynthesis; selenocysteinyl-tRNA(Sec) biosynthesis; L-seryl-tRNA(Sec) from L-serine and tRNA(Sec): step 1/1. Catalyzes the attachment of serine to tRNA(Ser). Is also able to aminoacylate tRNA(Sec) with serine, to form the misacylated tRNA L-seryl-tRNA(Sec), which will be further converted into selenocysteinyl-tRNA(Sec). The sequence is that of Serine--tRNA ligase from Clostridium perfringens (strain ATCC 13124 / DSM 756 / JCM 1290 / NCIMB 6125 / NCTC 8237 / Type A).